Here is a 110-residue protein sequence, read N- to C-terminus: U32-theraphotoxin-Cg1a (110 aa).

Residues M1–S19 form the signal peptide. The propeptide occupies L20 to R43. Cystine bridges form between C49-C63, C56-C69, C60-C105, and C62-C80.

The protein belongs to the neurotoxin 03 (Tx2) family. 02 subfamily. As to expression, expressed by the venom gland.

The protein resides in the secreted. Functionally, probable ion channel inhibitor. The sequence is that of U32-theraphotoxin-Cg1a from Chilobrachys guangxiensis (Chinese earth tiger tarantula).